Here is a 117-residue protein sequence, read N- to C-terminus: Large ribosomal subunit protein uL18 (117 aa).

It belongs to the universal ribosomal protein uL18 family. As to quaternary structure, part of the 50S ribosomal subunit; part of the 5S rRNA/L5/L18/L25 subcomplex. Contacts the 5S and 23S rRNAs.

Its function is as follows. This is one of the proteins that bind and probably mediate the attachment of the 5S RNA into the large ribosomal subunit, where it forms part of the central protuberance. This is Large ribosomal subunit protein uL18 from Edwardsiella ictaluri (strain 93-146).